Reading from the N-terminus, the 54-residue chain is FATVDCSDHPKPVCSLEYMPLCGSDSKTYSNKCDFCNAVVESNGTLTLSHFGKC.

The region spanning 4-54 is the Kazal-like domain; it reads VDCSDHPKPVCSLEYMPLCGSDSKTYSNKCDFCNAVVESNGTLTLSHFGKC. Intrachain disulfides connect Cys-6–Cys-36, Cys-14–Cys-33, and Cys-22–Cys-54. N-linked (GlcNAc...) asparagine glycosylation is present at Asn-43.

The protein localises to the secreted. This is Ovomucoid from Rhea americana (Greater rhea).